The primary structure comprises 201 residues: Recombination protein RecR (201 aa).

A C4-type zinc finger spans residues 57 to 72; that stretch reads CECCRTLTEEPLCRIC. A Toprim domain is found at 81 to 176; the sequence is GVLCIVETPA…NTTRIAHGVP (96 aa).

It belongs to the RecR family.

Functionally, may play a role in DNA repair. It seems to be involved in an RecBC-independent recombinational process of DNA repair. It may act with RecF and RecO. This chain is Recombination protein RecR, found in Idiomarina loihiensis (strain ATCC BAA-735 / DSM 15497 / L2-TR).